A 431-amino-acid polypeptide reads, in one-letter code: MSLMTKLGFRALVASCLITAGSAANAQVNVLITGVGSTQFPIATANFTNEANLPQQVTSIVRADLARSGKFTNIDAGSTPVPETASVDLGAWKAKGANAFVAGSVNREANGQYKVNFILYDTVKQQSLGGLSLTATDTTLRTAGHKIADYIYQKLLGVRGVFATRLSYVIKTGNRYQLQISDSDGQNARIALSSTEPIISPAWSPSGTKVAYVSFERKKPIVYIHDLPTGRRYMVSDQKGNNSAPAWSPDSNTLAVALSLTGNTQIYTVNANGGGLRRLTQSSSIDTEPFYSPDGRWIYFTSDRGGAPQIYRMPAQGESAGAAQRVTFTGSYNTSPRVSPDGKLLAYISRTGGGFKLYVQDLQTGAANAITNTNRDESPSFAANGQYLLYATQSGGRNVLAAVPSDGSAPPQILSVQGGSVREPSWGPFMQ.

An N-terminal signal peptide occupies residues 1–26 (MSLMTKLGFRALVASCLITAGSAANA). The tract at residues 406 to 431 (DGSAPPQILSVQGGSVREPSWGPFMQ) is disordered.

This sequence belongs to the TolB family. In terms of assembly, the Tol-Pal system is composed of five core proteins: the inner membrane proteins TolA, TolQ and TolR, the periplasmic protein TolB and the outer membrane protein Pal. They form a network linking the inner and outer membranes and the peptidoglycan layer.

The protein resides in the periplasm. Part of the Tol-Pal system, which plays a role in outer membrane invagination during cell division and is important for maintaining outer membrane integrity. The chain is Tol-Pal system protein TolB from Burkholderia cenocepacia (strain ATCC BAA-245 / DSM 16553 / LMG 16656 / NCTC 13227 / J2315 / CF5610) (Burkholderia cepacia (strain J2315)).